The primary structure comprises 516 residues: Probable inactive beta-glucosidase 14 (516 aa).

Residues 1–23 (MAAAWLVVLLTVHRLLHLSGVSA) form the signal peptide. A beta-D-glucoside contacts are provided by residues glutamine 43, histidine 145, and 190–191 (NQ). N-linked (GlcNAc...) asparagine glycosylation is present at asparagine 193. A disulfide bond links cysteine 210 and cysteine 217. Residues asparagine 221 and asparagine 270 are each glycosylated (N-linked (GlcNAc...) asparagine). Tyrosine 334 provides a ligand contact to a beta-D-glucoside. The cysteines at positions 342 and 347 are disulfide-linked. Glutamate 405 contacts a beta-D-glucoside. The active-site Nucleophile is glutamate 405. 2 N-linked (GlcNAc...) asparagine glycosylation sites follow: asparagine 415 and asparagine 423. A beta-D-glucoside is bound by residues tryptophan 454, 461 to 462 (EW), and phenylalanine 470.

This sequence belongs to the glycosyl hydrolase 1 family. As to expression, expressed in flowers and endosperm.

The chain is Probable inactive beta-glucosidase 14 from Oryza sativa subsp. japonica (Rice).